The sequence spans 413 residues: Protein LAZY 1 (413 aa).

The chain crosses the membrane as a helical span at residues 71–91 (FTFGGSGLLTIGTLGIAAVAV). Acidic residues predominate over residues 103–124 (DADADSDFDDNDDTAGDDEDQV). Disordered regions lie at residues 103–127 (DADA…VDSA) and 261–308 (EDGG…ASAT). 2 consecutive short sequence motifs (nuclear localization signal) follow at residues 275 to 298 (RKAG…EKVP) and 338 to 345 (KKSRKRGS).

This sequence belongs to the LAZY family. Expressed in the node of the stem, initiating leaf founder cells, young leaf primordia, tips of axillary meristems, spikelet pair meristems of developing tassels and ears, male flower primordia, tassels, ears, silks and seeds. Expressed in leaf sheaths, leaf pulvinus and shoot apical meristem (SAM).

Its subcellular location is the cell membrane. It is found in the nucleus. Involved in the regulation of shoot gravitropism, and tassel and ear development through the regulation of polar auxin transport (PAT) and auxin signaling. Acts as a negative regulator of basipetal PAT, but positive regulator of lateral auxin transport. Involved in the regulation of shoot gravitropism and leaf angle through the regulation of cell development. This chain is Protein LAZY 1, found in Zea mays (Maize).